The primary structure comprises 961 residues: Copper-exporting P-type ATPase (961 aa).

2 consecutive HMA domains span residues glutamine 3–threonine 64 and proline 69–threonine 130. Residues cysteine 14, cysteine 17, cysteine 80, and cysteine 83 each contribute to the Cu(+) site. Disordered stretches follow at residues glutamine 131–leucine 153 and valine 178–alanine 201. Polar residues predominate over residues leucine 142–glutamate 151. One can recognise an HMA 3 domain in the interval glutamate 226–glutamate 289. Residues cysteine 237 and cysteine 240 each contribute to the Cu(+) site. 5 helical membrane-spanning segments follow: residues alanine 316 to methionine 336, proline 345 to tyrosine 365, threonine 381 to proline 401, alanine 565 to phenylalanine 585, and valine 592 to leucine 612. Aspartate 650 acts as the 4-aspartylphosphate intermediate in catalysis. Positions 847 and 851 each coordinate Mg(2+). A run of 3 helical transmembrane segments spans residues valine 860–methionine 880, leucine 906–phenylalanine 926, and glycine 928–valine 948.

Belongs to the cation transport ATPase (P-type) (TC 3.A.3) family. Type IB subfamily.

The protein resides in the cell membrane. The catalysed reaction is Cu(+)(in) + ATP + H2O = Cu(+)(out) + ADP + phosphate + H(+). Functionally, involved in copper export. The protein is Copper-exporting P-type ATPase (copA) of Yersinia pestis.